The following is a 312-amino-acid chain: Homoserine O-succinyltransferase (312 aa).

The Acyl-thioester intermediate role is filled by C142. K163 and S192 together coordinate substrate. H235 acts as the Proton acceptor in catalysis. The active site involves E237. R249 is a binding site for substrate.

The protein belongs to the MetA family.

It localises to the cytoplasm. The enzyme catalyses L-homoserine + succinyl-CoA = O-succinyl-L-homoserine + CoA. It functions in the pathway amino-acid biosynthesis; L-methionine biosynthesis via de novo pathway; O-succinyl-L-homoserine from L-homoserine: step 1/1. Its function is as follows. Transfers a succinyl group from succinyl-CoA to L-homoserine, forming succinyl-L-homoserine. This chain is Homoserine O-succinyltransferase, found in Aliivibrio salmonicida (strain LFI1238) (Vibrio salmonicida (strain LFI1238)).